Reading from the N-terminus, the 68-residue chain is Conotoxin G1.9 (68 aa).

The signal sequence occupies residues 1–21; the sequence is MGMRMMFTVFLLVVLATTVVS. The propeptide occupies 22-44; sequence FTSRRGPKSRRGEPVPTTVINYG. 2 cysteine pairs are disulfide-bonded: C46-C52 and C47-C61.

The protein belongs to the conotoxin A superfamily. In terms of tissue distribution, expressed by the venom duct.

It is found in the secreted. In terms of biological role, does not show activity on all the human nAChR subtypes studied. This chain is Conotoxin G1.9, found in Conus geographus (Geography cone).